The primary structure comprises 871 residues: Leucine--tRNA ligase (871 aa).

Residues 43-53 (PYPSGRIHIGH) carry the 'HIGH' region motif. The 'KMSKS' region motif lies at 629–633 (KMSKS). Position 632 (K632) interacts with ATP.

Belongs to the class-I aminoacyl-tRNA synthetase family.

Its subcellular location is the cytoplasm. The catalysed reaction is tRNA(Leu) + L-leucine + ATP = L-leucyl-tRNA(Leu) + AMP + diphosphate. The chain is Leucine--tRNA ligase from Chelativorans sp. (strain BNC1).